A 419-amino-acid polypeptide reads, in one-letter code: UDP-N-acetylglucosamine 1-carboxyvinyltransferase (419 aa).

Residue 22–23 (KN) participates in phosphoenolpyruvate binding. Arg-91 is a UDP-N-acetyl-alpha-D-glucosamine binding site. The active-site Proton donor is Cys-115. Cys-115 carries the post-translational modification 2-(S-cysteinyl)pyruvic acid O-phosphothioketal. Residues 120–124 (RPVDL), 160–163 (KVSV), Asp-305, and Ile-327 contribute to the UDP-N-acetyl-alpha-D-glucosamine site.

It belongs to the EPSP synthase family. MurA subfamily.

The protein resides in the cytoplasm. It catalyses the reaction phosphoenolpyruvate + UDP-N-acetyl-alpha-D-glucosamine = UDP-N-acetyl-3-O-(1-carboxyvinyl)-alpha-D-glucosamine + phosphate. It participates in cell wall biogenesis; peptidoglycan biosynthesis. Functionally, cell wall formation. Adds enolpyruvyl to UDP-N-acetylglucosamine. The protein is UDP-N-acetylglucosamine 1-carboxyvinyltransferase of Citrobacter koseri (strain ATCC BAA-895 / CDC 4225-83 / SGSC4696).